The sequence spans 175 residues: Cytochrome c homolog (175 aa).

Topologically, residues 1 to 8 (MSGKELNK) are cytoplasmic. A helical; Signal-anchor membrane pass occupies residues 9-29 (IVAAILFASLIAMMVGFVANI). Residues 30–175 (LYKPTLELQH…LFLKTYVHDK (146 aa)) lie on the Periplasmic side of the membrane. The heme c site is built by C84, C87, H88, and M150.

This sequence belongs to the cytochrome c family. In terms of processing, binds 1 heme c group covalently per subunit.

The protein localises to the cell membrane. In terms of biological role, may be involved in electron transfer from bc1 complex to aa3. The sequence is that of Cytochrome c homolog (cycM) from Rickettsia felis (strain ATCC VR-1525 / URRWXCal2) (Rickettsia azadi).